The chain runs to 506 residues: Probable E3 ubiquitin-protein ligase ARI14 (506 aa).

The interval 79-308 (PDSSSEISLE…VDSGFCIKTE (230 aa)) is TRIAD supradomain. An RING-type 1 zinc finger spans residues 83 to 140 (SEISLETDVYEFDGDNDLISMPFCSHKFDSKYWREYLEKNFYYVEKIQTTISCPDQDC). Cys106, His108, Cys135, Cys140, Cys180, Cys185, Cys207, Cys209, Cys214, Cys217, His222, Cys227, Cys258, Cys261, Cys277, Cys279, Cys284, Cys287, His294, and Cys304 together coordinate Zn(2+). The IBR-type zinc-finger motif lies at 158-227 (EMYERYIWRS…RLESHRPVSC (70 aa)). The RING-type 2; atypical zinc finger occupies 258-287 (CPHCLCSLESDTKMPQFLTCVCRLRFCSRC). The RanBP2-type zinc finger occupies 462–492 (GTGPFWYCDRCTYANTWEDNECEMCYDDSAS).

The protein belongs to the RBR family. Ariadne subfamily. The cofactor is Zn(2+). As to expression, mostly expressed in closed flowers and, to a lower extent, in pollen.

The catalysed reaction is [E2 ubiquitin-conjugating enzyme]-S-ubiquitinyl-L-cysteine + [acceptor protein]-L-lysine = [E2 ubiquitin-conjugating enzyme]-L-cysteine + [acceptor protein]-N(6)-ubiquitinyl-L-lysine.. It participates in protein modification; protein ubiquitination. Its function is as follows. Might act as an E3 ubiquitin-protein ligase, or as part of E3 complex, which accepts ubiquitin from specific E2 ubiquitin-conjugating enzymes and then transfers it to substrates. Negatively regulates male gametophyte formation and double fertilization. This is Probable E3 ubiquitin-protein ligase ARI14 from Arabidopsis thaliana (Mouse-ear cress).